We begin with the raw amino-acid sequence, 323 residues long: Large ribosomal subunit protein uL10 (323 aa).

Residues 296–323 form a disordered region; the sequence is AAPAAPSAAAKEEPEESDEDDFGMGGLF. The span at 308-317 shows a compositional bias: acidic residues; sequence EPEESDEDDF.

It belongs to the universal ribosomal protein uL10 family. As to quaternary structure, P0 forms a pentameric complex by interaction with dimers of P1 and P2. In terms of processing, phosphorylated.

Ribosomal protein P0 is the functional equivalent of E.coli protein L10. In Leishmania infantum, this protein is Large ribosomal subunit protein uL10 (LIPO-A).